The chain runs to 150 residues: Deoxyuridine 5'-triphosphate nucleotidohydrolase (150 aa).

Residues 68-70 (RSG), Asn-81, 85-87 (TID), and Lys-95 each bind substrate.

Belongs to the dUTPase family. Requires Mg(2+) as cofactor.

It carries out the reaction dUTP + H2O = dUMP + diphosphate + H(+). It participates in pyrimidine metabolism; dUMP biosynthesis; dUMP from dCTP (dUTP route): step 2/2. Its function is as follows. This enzyme is involved in nucleotide metabolism: it produces dUMP, the immediate precursor of thymidine nucleotides and it decreases the intracellular concentration of dUTP so that uracil cannot be incorporated into DNA. This Rickettsia bellii (strain OSU 85-389) protein is Deoxyuridine 5'-triphosphate nucleotidohydrolase.